The primary structure comprises 828 residues: Periplasmic nitrate reductase (828 aa).

Positions 1-31 form a signal peptide, tat-type signal; that stretch reads MKLSRRSFMKANAVAAAAAAAGLSVPGVARA. The 4Fe-4S Mo/W bis-MGD-type domain maps to 39–95; the sequence is IKWDKAPCRFCGTGCGVLVGTQQGRVVACQGDPDAPVNRGLNCIKGYFLPKIMYGKD. Residues cysteine 46, cysteine 49, cysteine 53, and cysteine 81 each contribute to the [4Fe-4S] cluster site. Mo-bis(molybdopterin guanine dinucleotide) contacts are provided by residues lysine 83, glutamine 150, asparagine 175, cysteine 179, 212–219, 243–247, 262–264, methionine 372, glutamine 376, asparagine 482, 508–509, lysine 531, aspartate 558, and 718–727; these read WGANMAEM, STYQH, QSD, SD, and TGRVLEHWHT. Phenylalanine 794 is a binding site for substrate. Mo-bis(molybdopterin guanine dinucleotide) contacts are provided by asparagine 802 and lysine 819.

It belongs to the prokaryotic molybdopterin-containing oxidoreductase family. NasA/NapA/NarB subfamily. In terms of assembly, component of the periplasmic nitrate reductase NapAB complex composed of NapA and NapB. [4Fe-4S] cluster serves as cofactor. It depends on Mo-bis(molybdopterin guanine dinucleotide) as a cofactor. Post-translationally, predicted to be exported by the Tat system. The position of the signal peptide cleavage has not been experimentally proven.

It localises to the periplasm. The enzyme catalyses 2 Fe(II)-[cytochrome] + nitrate + 2 H(+) = 2 Fe(III)-[cytochrome] + nitrite + H2O. Functionally, catalytic subunit of the periplasmic nitrate reductase complex NapAB. Receives electrons from NapB and catalyzes the reduction of nitrate to nitrite. The polypeptide is Periplasmic nitrate reductase (Shigella flexneri).